A 470-amino-acid polypeptide reads, in one-letter code: Glutamate--tRNA ligase 2 (470 aa).

A 'HIGH' region motif is present at residues 11 to 21 (PSPTGHLHLGG). Residues 238–242 (KLSKR) carry the 'KMSKS' region motif. Lysine 241 contributes to the ATP binding site.

It belongs to the class-I aminoacyl-tRNA synthetase family. Glutamate--tRNA ligase type 1 subfamily. As to quaternary structure, monomer.

It localises to the cytoplasm. The catalysed reaction is tRNA(Glu) + L-glutamate + ATP = L-glutamyl-tRNA(Glu) + AMP + diphosphate. Functionally, catalyzes the attachment of glutamate to tRNA(Glu) in a two-step reaction: glutamate is first activated by ATP to form Glu-AMP and then transferred to the acceptor end of tRNA(Glu). This chain is Glutamate--tRNA ligase 2, found in Ehrlichia ruminantium (strain Welgevonden).